The sequence spans 645 residues: Translation factor GUF1 homolog, mitochondrial (645 aa).

A tr-type G domain is found at 40-215; that stretch reads EKIRNFGIVA…AIVERVPAPT (176 aa). GTP is bound by residues 49–56, 108–112, and 162–165; these read AHVDHGKS, DTPGH, and NKID.

This sequence belongs to the TRAFAC class translation factor GTPase superfamily. Classic translation factor GTPase family. LepA subfamily.

It is found in the mitochondrion inner membrane. The catalysed reaction is GTP + H2O = GDP + phosphate + H(+). Promotes mitochondrial protein synthesis. May act as a fidelity factor of the translation reaction, by catalyzing a one-codon backward translocation of tRNAs on improperly translocated ribosomes. Binds to mitochondrial ribosomes in a GTP-dependent manner. This is Translation factor GUF1 homolog, mitochondrial from Caenorhabditis briggsae.